The following is a 451-amino-acid chain: Eukaryotic translation initiation factor 3 subunit E (451 aa).

The PCI domain occupies 245–425; sequence PFFNHEPARD…GTVVMNHPPS (181 aa).

It belongs to the eIF-3 subunit E family. In terms of assembly, component of the eukaryotic translation initiation factor 3 (eIF-3) complex.

It localises to the cytoplasm. In terms of biological role, component of the eukaryotic translation initiation factor 3 (eIF-3) complex, which is involved in protein synthesis of a specialized repertoire of mRNAs and, together with other initiation factors, stimulates binding of mRNA and methionyl-tRNAi to the 40S ribosome. The eIF-3 complex specifically targets and initiates translation of a subset of mRNAs involved in cell proliferation. This is Eukaryotic translation initiation factor 3 subunit E (int6) from Sclerotinia sclerotiorum (strain ATCC 18683 / 1980 / Ss-1) (White mold).